The following is a 256-amino-acid chain: Small ribosomal subunit protein eS1 (256 aa).

Residues 1–18 are compositionally biased toward basic residues; the sequence is MAVGKNKRLSKGKKGIKK. The tract at residues 1–20 is disordered; it reads MAVGKNKRLSKGKKGIKKRT. Ala2 is subject to N-acetylalanine; partial.

It belongs to the eukaryotic ribosomal protein eS1 family. Component of the small ribosomal subunit. Mature ribosomes consist of a small (40S) and a large (60S) subunit. The 40S subunit contains about 33 different proteins and 1 molecule of RNA (18S). The 60S subunit contains about 49 different proteins and 3 molecules of RNA (25S, 5.8S and 5S).

It localises to the cytoplasm. The protein is Small ribosomal subunit protein eS1 (rps1) of Aspergillus flavus (strain ATCC 200026 / FGSC A1120 / IAM 13836 / NRRL 3357 / JCM 12722 / SRRC 167).